The following is a 41-amino-acid chain: Large ribosomal subunit protein bL36 (41 aa).

The protein belongs to the bacterial ribosomal protein bL36 family.

The sequence is that of Large ribosomal subunit protein bL36 from Nitrobacter winogradskyi (strain ATCC 25391 / DSM 10237 / CIP 104748 / NCIMB 11846 / Nb-255).